A 292-amino-acid chain; its full sequence is 5,10-methylenetetrahydrofolate reductase (292 aa).

Glu26 acts as the Proton donor/acceptor in catalysis. Thr57 is an NADH binding site. 14 residues coordinate FAD: Tyr58, Ala60, His86, Arg116, Gly117, Asp118, Ala130, Tyr150, His154, Ala157, Asp163, Asn166, Arg169, and Lys170. A (6S)-5-methyl-5,6,7,8-tetrahydrofolate-binding site is contributed by Asp118. An NADH-binding site is contributed by Gln181. (6S)-5-methyl-5,6,7,8-tetrahydrofolate is bound by residues Gln181, Gln217, and Arg277.

It belongs to the methylenetetrahydrofolate reductase family. Requires FAD as cofactor.

The enzyme catalyses (6S)-5-methyl-5,6,7,8-tetrahydrofolate + NAD(+) = (6R)-5,10-methylene-5,6,7,8-tetrahydrofolate + NADH + H(+). Its pathway is one-carbon metabolism; tetrahydrofolate interconversion. The protein operates within amino-acid biosynthesis; L-methionine biosynthesis via de novo pathway. Functionally, catalyzes the NADH-dependent reduction of 5,10-methylenetetrahydrofolate to 5-methyltetrahydrofolate. Is required to provide the methyl group necessary for methionine synthetase to convert homocysteine to methionine; the methyl group is given by 5-methyltetrahydrofolate. The polypeptide is 5,10-methylenetetrahydrofolate reductase (metF) (Haemophilus influenzae (strain ATCC 51907 / DSM 11121 / KW20 / Rd)).